A 94-amino-acid polypeptide reads, in one-letter code: Large ribosomal subunit protein bL27 (94 aa).

A propeptide spanning residues Met1–Phe9 is cleaved from the precursor.

Belongs to the bacterial ribosomal protein bL27 family. In terms of assembly, part of the 50S ribosomal subunit. In terms of processing, the N-terminus is cleaved by ribosomal processing cysteine protease Prp.

Plays a role in sporulation at high temperatures. This chain is Large ribosomal subunit protein bL27 (rpmA), found in Bacillus subtilis (strain 168).